Here is a 213-residue protein sequence, read N- to C-terminus: uncharacterized protein (213 aa).

The CS domain maps to Ser-2–Val-91. The disordered stretch occupies residues Gly-168 to Ser-213. Residues Asp-176 to Glu-187 are compositionally biased toward acidic residues. The span at Val-188 to Ser-213 shows a compositional bias: basic and acidic residues.

It belongs to the p23/wos2 family.

This is an uncharacterized protein from Oryza sativa subsp. japonica (Rice).